The chain runs to 479 residues: uncharacterized protein (479 aa).

ATP contacts are provided by residues 150–158 (TSGSTGKPK), Asp-360, Arg-375, and Lys-462.

Belongs to the ATP-dependent AMP-binding enzyme family.

Functionally, may be involved in fatty acid metabolism. This is an uncharacterized protein from Bacillus subtilis (strain 168).